A 142-amino-acid chain; its full sequence is ATP synthase epsilon chain (142 aa).

The protein belongs to the ATPase epsilon chain family. F-type ATPases have 2 components, CF(1) - the catalytic core - and CF(0) - the membrane proton channel. CF(1) has five subunits: alpha(3), beta(3), gamma(1), delta(1), epsilon(1). CF(0) has three main subunits: a, b and c.

The protein localises to the cell inner membrane. Its function is as follows. Produces ATP from ADP in the presence of a proton gradient across the membrane. The protein is ATP synthase epsilon chain of Pasteurella multocida (strain Pm70).